Here is a 401-residue protein sequence, read N- to C-terminus: Argininosuccinate synthase (401 aa).

Residue 9 to 17 participates in ATP binding; that stretch reads AYSGGLDTS. Residue Y87 participates in L-citrulline binding. G117 serves as a coordination point for ATP. 3 residues coordinate L-aspartate: T119, N123, and D124. N123 lines the L-citrulline pocket. L-citrulline is bound by residues R127, S176, S185, E261, and Y273.

It belongs to the argininosuccinate synthase family. Type 1 subfamily. As to quaternary structure, homotetramer.

It localises to the cytoplasm. The catalysed reaction is L-citrulline + L-aspartate + ATP = 2-(N(omega)-L-arginino)succinate + AMP + diphosphate + H(+). The protein operates within amino-acid biosynthesis; L-arginine biosynthesis; L-arginine from L-ornithine and carbamoyl phosphate: step 2/3. The sequence is that of Argininosuccinate synthase from Prosthecochloris aestuarii (strain DSM 271 / SK 413).